A 279-amino-acid chain; its full sequence is MADS-box transcription factor PHERES 1 (279 aa).

Residues 1–60 form the MADS-box domain; that stretch reads MRGKMKLSFIENDSVRKTTFTKRKKGMLKKFNELVTLCGVDACAVIRSPYNSIQEPWPSR.

Interacts with AGL61/DIANA and AGL62. Male gametophyte, embryo and endosperm.

It is found in the nucleus. Functionally, probable transcription factor involved in the development of gametophytes and seeds. The protein is MADS-box transcription factor PHERES 1 (PHE1) of Arabidopsis thaliana (Mouse-ear cress).